Here is a 482-residue protein sequence, read N- to C-terminus: Cobyric acid synthase (482 aa).

Residues 243–430 enclose the GATase cobBQ-type domain; it reads ACKVVVPQLE…LHGLFTSDAF (188 aa). Residue C325 is the Nucleophile of the active site. H422 is a catalytic residue.

Belongs to the CobB/CobQ family. CobQ subfamily.

It functions in the pathway cofactor biosynthesis; adenosylcobalamin biosynthesis. In terms of biological role, catalyzes amidations at positions B, D, E, and G on adenosylcobyrinic A,C-diamide. NH(2) groups are provided by glutamine, and one molecule of ATP is hydrogenolyzed for each amidation. The protein is Cobyric acid synthase of Ruegeria sp. (strain TM1040) (Silicibacter sp.).